The following is a 169-amino-acid chain: S-ribosylhomocysteine lyase (169 aa).

The Fe cation site is built by His-54, His-58, and Cys-128.

It belongs to the LuxS family. Homodimer. Fe cation serves as cofactor.

The catalysed reaction is S-(5-deoxy-D-ribos-5-yl)-L-homocysteine = (S)-4,5-dihydroxypentane-2,3-dione + L-homocysteine. Functionally, involved in the synthesis of autoinducer 2 (AI-2) which is secreted by bacteria and is used to communicate both the cell density and the metabolic potential of the environment. The regulation of gene expression in response to changes in cell density is called quorum sensing. Catalyzes the transformation of S-ribosylhomocysteine (RHC) to homocysteine (HC) and 4,5-dihydroxy-2,3-pentadione (DPD). This is S-ribosylhomocysteine lyase from Shewanella frigidimarina (strain NCIMB 400).